Consider the following 326-residue polypeptide: Triacylglycerol lipase 2 (326 aa).

The (A/G)XSXG lipase motif signature appears at 142-146 (AHSMG).

Interacts with MIA40; forms mixed disulfide intermediates with MIA40.

It is found in the mitochondrion. The protein localises to the mitochondrion intermembrane space. It carries out the reaction a triacylglycerol + H2O = a diacylglycerol + a fatty acid + H(+). The catalysed reaction is 1,2,3-tri-(9Z-octadecenoyl)-glycerol + H2O = di-(9Z)-octadecenoylglycerol + (9Z)-octadecenoate + H(+). The enzyme catalyses 1,2,3-tributanoylglycerol + H2O = dibutanoylglycerol + butanoate + H(+). It catalyses the reaction 1,2,3-trioctanoylglycerol + H2O = dioctanoylglycerol + octanoate + H(+). It carries out the reaction di-(9Z)-octadecenoylglycerol + H2O = (9Z-octadecenoyl)-glycerol + (9Z)-octadecenoate + H(+). The catalysed reaction is dioctanoylglycerol + H2O = octanoylglycerol + octanoate + H(+). In terms of biological role, mitochondrial triacylglycerol (TAG) lipase with activity toward long-chain diacylglycerols (DAGs) and triacylglycerols (TAGs). Involved in mitochondrial lipid metabolism. In Saccharomyces cerevisiae (strain ATCC 204508 / S288c) (Baker's yeast), this protein is Triacylglycerol lipase 2 (TGL2).